Here is a 603-residue protein sequence, read N- to C-terminus: Laccase 1 (603 aa).

The N-terminal stretch at 1 to 20 is a signal peptide; it reads MSRFARLLLIVALFFTNAWA. Plastocyanin-like domains are found at residues 66 to 108 and 159 to 349; these read QRPI…IHIR and LVVS…MRIP. H90 and H92 together coordinate Cu cation. N-linked (GlcNAc...) asparagine glycans are attached at residues N246, N269, N434, and N474. The region spanning 460 to 588 is the Plastocyanin-like 3 domain; the sequence is TRDTENDGLV…GGMGIAILDG (129 aa). Residues H496, H499, and H501 each contribute to the Cu cation site. N516 is a glycosylation site (N-linked (GlcNAc...) asparagine). Positions 570, 571, 572, and 576 each coordinate Cu cation.

It belongs to the multicopper oxidase family. It depends on Cu cation as a cofactor.

The protein localises to the cell surface. The protein operates within pigment biosynthesis. In terms of biological role, laccase; part of the Pks1 gene cluster that mediates the biosynthesis of an anthraquinone derivative pigment that contributes to conidial pigmentation that provides protection from UV radiation, heat and cold stress. The polyketide synthase Pks1 produces 1-acetyl-2,4,6,8-tetrahydroxy-9,10-anthraquinone though condensation of acetyl-CoA with malonyl-CoA. The dehydratase EthD and the laccase Mlac1 further convert the anthraquinone derivative into the final conidial pigment. This chain is Laccase 1, found in Metarhizium anisopliae (Entomophthora anisopliae).